Here is a 148-residue protein sequence, read N- to C-terminus: MLKEFKDFAVRGNVVDMAVGIIIGAAFTTIINTLVNEVVMPPIGVLLGGVDFSDFYLLLKEGSKAAPYESLAAAKSAGAVTLSYGIFVNACISFLIVTFVMFLSVKGINRLRAKEDAAPDPAVRECPFCCSPVSVKAKRCPMCTSELK.

Helical transmembrane passes span Val-14–Leu-34 and Gly-85–Val-105.

The protein belongs to the MscL family. Homopentamer.

The protein localises to the cell inner membrane. Its function is as follows. Channel that opens in response to stretch forces in the membrane lipid bilayer. May participate in the regulation of osmotic pressure changes within the cell. This Chlorobium phaeobacteroides (strain DSM 266 / SMG 266 / 2430) protein is Large-conductance mechanosensitive channel.